The primary structure comprises 527 residues: Glutamate--cysteine ligase (527 aa).

It belongs to the glutamate--cysteine ligase type 1 family. Type 1 subfamily.

It catalyses the reaction L-cysteine + L-glutamate + ATP = gamma-L-glutamyl-L-cysteine + ADP + phosphate + H(+). It participates in sulfur metabolism; glutathione biosynthesis; glutathione from L-cysteine and L-glutamate: step 1/2. The sequence is that of Glutamate--cysteine ligase from Pseudomonas aeruginosa (strain ATCC 15692 / DSM 22644 / CIP 104116 / JCM 14847 / LMG 12228 / 1C / PRS 101 / PAO1).